The sequence spans 274 residues: Diaminopimelate epimerase (274 aa).

Residues N11, Q44, and N64 each coordinate substrate. C73 acts as the Proton donor in catalysis. Residues 74 to 75, N157, N190, and 208 to 209 each bind substrate; these read GN and ER. C217 functions as the Proton acceptor in the catalytic mechanism. 218–219 serves as a coordination point for substrate; that stretch reads GS.

The protein belongs to the diaminopimelate epimerase family. Homodimer.

It localises to the cytoplasm. It carries out the reaction (2S,6S)-2,6-diaminopimelate = meso-2,6-diaminopimelate. It functions in the pathway amino-acid biosynthesis; L-lysine biosynthesis via DAP pathway; DL-2,6-diaminopimelate from LL-2,6-diaminopimelate: step 1/1. Functionally, catalyzes the stereoinversion of LL-2,6-diaminopimelate (L,L-DAP) to meso-diaminopimelate (meso-DAP), a precursor of L-lysine and an essential component of the bacterial peptidoglycan. In Pasteurella multocida (strain Pm70), this protein is Diaminopimelate epimerase.